We begin with the raw amino-acid sequence, 160 residues long: Phosphopantetheine adenylyltransferase (160 aa).

S9 serves as a coordination point for substrate. ATP-binding positions include 9-10 (SF) and H17. The substrate site is built by K41, T73, and R87. ATP is bound by residues 88-90 (GMR), E98, and 123-129 (YTFFSSS).

The protein belongs to the bacterial CoaD family. In terms of assembly, homohexamer. The cofactor is Mg(2+).

It is found in the cytoplasm. It carries out the reaction (R)-4'-phosphopantetheine + ATP + H(+) = 3'-dephospho-CoA + diphosphate. The protein operates within cofactor biosynthesis; coenzyme A biosynthesis; CoA from (R)-pantothenate: step 4/5. Its function is as follows. Reversibly transfers an adenylyl group from ATP to 4'-phosphopantetheine, yielding dephospho-CoA (dPCoA) and pyrophosphate. The protein is Phosphopantetheine adenylyltransferase of Roseiflexus castenholzii (strain DSM 13941 / HLO8).